A 55-amino-acid chain; its full sequence is MKIIYAFLLIAVVAFMGSGIMAESLAEAIADKPGQAKKIGIFDRITELVNWLVNH.

A signal peptide spans M1 to A22. The propeptide occupies E23–I29.

It belongs to the formicidae venom clade 4 family. As to expression, expressed by the venom gland.

The protein resides in the secreted. Its function is as follows. Probable neurotoxin. This chain is Myrmicitoxin(1)-Pr6b, found in Pogonomyrmex rugosus (Desert harvester ant).